We begin with the raw amino-acid sequence, 185 residues long: Ribosome-recycling factor (185 aa).

Belongs to the RRF family.

Its subcellular location is the cytoplasm. In terms of biological role, responsible for the release of ribosomes from messenger RNA at the termination of protein biosynthesis. May increase the efficiency of translation by recycling ribosomes from one round of translation to another. This Rhodococcus erythropolis (strain PR4 / NBRC 100887) protein is Ribosome-recycling factor.